Here is a 189-residue protein sequence, read N- to C-terminus: S-protein homolog 26 (189 aa).

The first 25 residues, 1-25, serve as a signal peptide directing secretion; it reads MISMNRLSILLFVFAFGLTMMSNTA.

This sequence belongs to the plant self-incompatibility (S1) protein family.

The protein localises to the secreted. This Arabidopsis thaliana (Mouse-ear cress) protein is S-protein homolog 26.